Consider the following 402-residue polypeptide: Septin CDC11 (402 aa).

At M1 the chain carries N-acetylmethionine. At S4 the chain carries Phosphoserine. A Basic motif motif is present at residues 14-21 (RKRKTLKK). The Septin-type G domain maps to 21-307 (KSINFSIMII…ENYRTEALSG (287 aa)). Positions 31-38 (GESGSGRS) are G1 motif. 31-38 (GESGSGRS) provides a ligand contact to GTP. The tract at residues 89–92 (DTPN) is G3 motif. Residues 171-174 (SKAD) are G4 motif. GTP is bound by residues 172 to 180 (KADSLTPKE) and G233. A coiled-coil region spans residues 318–376 (AKQEISESDYLMKEEQIKLEEERLRKFEERVHQDLINKRKELLERENELKEIEKRLLAE). A Phosphoserine; by CDC28 modification is found at S394. Phosphoserine; by GIN4 is present on S395.

It belongs to the TRAFAC class TrmE-Era-EngA-EngB-Septin-like GTPase superfamily. Septin GTPase family. As to quaternary structure, component of the septin complex which consists of CDC3, CDC10, CDC11, CDC12 and probably SEP7. The purified septin complex appeared to have a stoichiometry of 2 CDC3, 1 to 2 CDC10, 1 CDC11, 2 CDC12, and 1 or none SEP7 subunit. Interacts with HSL1. Hyphal induction causes immediate phosphorylation at Ser-395 by GIN4 and at Ser-394 by CDC28-CCN1. GIN4 phosphorylation at Ser-395 primes CDC11 for further phosphorylation by CDC28-CCN1. CDC28-HGC1 then maintains CDC11 phosphorylation throughout hyphal growth. Ser-4 is also phosphorylated in yeast cells but not hyphal cells. In terms of processing, met-1 is acetylated.

The protein localises to the bud neck. Functionally, septins are GTPases involved in cytokinesis that assemble early in the cell cycle as a patch at the incipient bud site and form a ring before bud emergence, which transforms into an hour-glass shaped collar of cortical filaments that spans both sides of the mother-bud neck. This collar persists until just before cytokinesis, when it splits into two rings that occupy opposite sides of the neck. The septins at the bud neck serve as a structural scaffold that recruits different components involved in diverse processes at specific stages during the cell cycle. Many proteins bind asymmetrically to the septin collar. The septin assembly is regulated by protein kinase GIN4. Septins are also involved in cell morphogenesis, chlamydospores morphogenesis, bud site selection, chitin deposition, cell cycle regulation, cell compartmentalization, and spore wall formation. CDC11 is required for the correct localization of SEC3 at bud tips and bud necks. Plays a key role in invasive growth and virulence. The polypeptide is Septin CDC11 (CDC11) (Candida albicans (strain SC5314 / ATCC MYA-2876) (Yeast)).